The following is a 70-amino-acid chain: Cold shock-like protein CspF (70 aa).

Positions 7 to 67 (GIVKTFDGKS…GLRGPSAANV (61 aa)) constitute a CSD domain.

Its subcellular location is the cytoplasm. The sequence is that of Cold shock-like protein CspF (cspF) from Escherichia coli (strain K12).